The sequence spans 370 residues: 3-isopropylmalate dehydrogenase (370 aa).

76–89 contacts NAD(+); sequence GPKWDQNPSELRPE. 4 residues coordinate substrate: R96, R106, R134, and D224. The Mg(2+) site is built by D224, D248, and D252. NAD(+) is bound at residue 282 to 294; that stretch reads GSAPDIAGQNIAN.

This sequence belongs to the isocitrate and isopropylmalate dehydrogenases family. LeuB type 1 subfamily. In terms of assembly, homodimer. The cofactor is Mg(2+). Mn(2+) is required as a cofactor.

Its subcellular location is the cytoplasm. It carries out the reaction (2R,3S)-3-isopropylmalate + NAD(+) = 4-methyl-2-oxopentanoate + CO2 + NADH. Its pathway is amino-acid biosynthesis; L-leucine biosynthesis; L-leucine from 3-methyl-2-oxobutanoate: step 3/4. Catalyzes the oxidation of 3-carboxy-2-hydroxy-4-methylpentanoate (3-isopropylmalate) to 3-carboxy-4-methyl-2-oxopentanoate. The product decarboxylates to 4-methyl-2 oxopentanoate. The sequence is that of 3-isopropylmalate dehydrogenase from Bacillus licheniformis (strain ATCC 14580 / DSM 13 / JCM 2505 / CCUG 7422 / NBRC 12200 / NCIMB 9375 / NCTC 10341 / NRRL NRS-1264 / Gibson 46).